The following is a 522-amino-acid chain: Protein tweety homolog 3 (522 aa).

Topologically, residues 1 to 43 are extracellular; sequence MAAAISYTPPWWVNLLHRLPHLNLQWESLNGDFRPEDPDYQQS. Residues 44–64 form a helical membrane-spanning segment; it reads LMLLACVALSCLALDLLFLLF. Topologically, residues 65 to 87 are cytoplasmic; it reads YSFWFCCRHRKTEENTNADCCCT. Residues 88–108 form a helical membrane-spanning segment; the sequence is VWCVIVATLVCSAGIAVGFYG. The Extracellular portion of the chain corresponds to 109–211; the sequence is NGETSDGIHR…VDLFDWYRWL (103 aa). Residues Glu-111 and Asp-114 each coordinate Ca(2+). Residues Asn-127 and Asn-145 are each glycosylated (N-linked (GlcNAc...) asparagine). The helical transmembrane segment at 212 to 232 threads the bilayer; it reads GYLGLLLFHVFICLLVLFGLI. Topologically, residues 233 to 238 are cytoplasmic; it reads RNSKGT. A helical membrane pass occupies residues 239–259; the sequence is LICVCFLGMMALIISWASMGL. Topologically, residues 260-386 are extracellular; that stretch reads ELAVAVGSSD…LTGFCYDGVE (127 aa). 2 disulfide bridges follow: Cys-271–Cys-381 and Cys-299–Cys-366. An N-linked (GlcNAc...) asparagine glycan is attached at Asn-351. The helical transmembrane segment at 387–407 threads the bilayer; that stretch reads GLIYLVLFSFVTALMFSSIVC. Over 408 to 522 the chain is Cytoplasmic; the sequence is SVPHTWQQRR…TNRPETDPVH (115 aa). The tract at residues 483-522 is disordered; it reads QNPRCENTPLIGRESPPPSYTSSMRAKYLATNRPETDPVH.

This sequence belongs to the tweety family. As to quaternary structure, homotetramer; disulfide-linked. Forms cis-homodimers in the presence of Ca(2+).

It is found in the cell membrane. The catalysed reaction is chloride(in) = chloride(out). It catalyses the reaction L-glutamate(out) = L-glutamate(in). Functionally, may act as a calcium-independent, swelling-dependent volume-regulated anion channel (VRAC-swell) which plays a pivotal role in the process of regulatory volume decrease (RVD) in the brain through the efflux of anions like chloride and organic osmolytes like glutamate. Probable large-conductance Ca(2+)-activated chloride channel. This Xenopus laevis (African clawed frog) protein is Protein tweety homolog 3 (ttyh3).